The primary structure comprises 949 residues: Valine--tRNA ligase (949 aa).

Residues Pro45–His55 carry the 'HIGH' region motif. A 'KMSKS' region motif is present at residues Lys561 to Ser565. Residue Lys564 participates in ATP binding. Residues Glu882 to Pro949 adopt a coiled-coil conformation.

It belongs to the class-I aminoacyl-tRNA synthetase family. ValS type 1 subfamily. In terms of assembly, monomer.

It is found in the cytoplasm. It catalyses the reaction tRNA(Val) + L-valine + ATP = L-valyl-tRNA(Val) + AMP + diphosphate. Functionally, catalyzes the attachment of valine to tRNA(Val). As ValRS can inadvertently accommodate and process structurally similar amino acids such as threonine, to avoid such errors, it has a 'posttransfer' editing activity that hydrolyzes mischarged Thr-tRNA(Val) in a tRNA-dependent manner. This chain is Valine--tRNA ligase, found in Protochlamydia amoebophila (strain UWE25).